Here is a 465-residue protein sequence, read N- to C-terminus: MRTEWVSARKGQANVSQMHYARKGVVTEEMAYVAKIENLPESLVMEEVARGRMIIPANVNHTNLEPMAIGIASKCKVNANIGASPNASDAAEEVNKLKLAVKYGADTVMDLSTGGVNLDEVRTSIIGASSVPIGTVPVYQALESVHGSIEKLDEDDFLHIIEKHCQQGVDYQTIHAGLLIEHLPKVKGRLTGIVSRGGGILAQWMLYHHRQNPLFTRFDDICEIFKRYDCTFSLGDSLRPGCQHDASDAAQLAELKTLGDLTRRAWKHDVQVMVEGPGHVPLDQIEFNVKKQMEECNEAPFYVLGPLVTDIAPGYDHITSAIGAAMAGWHGTAMLCYVTPKEHLGLPNAEDVREGLIAYKIAAHAADIARHRPGARDRDDELSRARYAFDWNKQFELSLDPERAKEYHDETLPADIYKQAEFCSMCGPKHCPMQTKITDADLDGLEQVLKSQGAAELVGVKQDKL.

Substrate-binding positions include Asn-80, Met-109, Tyr-139, His-175, 195–197 (SRG), 236–239 (DSLR), and Glu-275. His-279 lines the Zn(2+) pocket. Residue Tyr-302 participates in substrate binding. Residue His-343 participates in Zn(2+) binding. [4Fe-4S] cluster is bound by residues Cys-423, Cys-426, and Cys-431.

It belongs to the ThiC family. [4Fe-4S] cluster is required as a cofactor.

The catalysed reaction is 5-amino-1-(5-phospho-beta-D-ribosyl)imidazole + S-adenosyl-L-methionine = 4-amino-2-methyl-5-(phosphooxymethyl)pyrimidine + CO + 5'-deoxyadenosine + formate + L-methionine + 3 H(+). It functions in the pathway cofactor biosynthesis; thiamine diphosphate biosynthesis. Its function is as follows. Catalyzes the synthesis of the hydroxymethylpyrimidine phosphate (HMP-P) moiety of thiamine from aminoimidazole ribotide (AIR) in a radical S-adenosyl-L-methionine (SAM)-dependent reaction. The protein is Phosphomethylpyrimidine synthase of Synechococcus sp. (strain CC9311).